The sequence spans 256 residues: Leucyl/phenylalanyl-tRNA--protein transferase (256 aa).

Residues 232-256 form a disordered region; sequence DGCTGASRHGPGADMRRGDMSREST. A compositionally biased stretch (basic and acidic residues) spans 245 to 256; sequence DMRRGDMSREST.

Belongs to the L/F-transferase family.

The protein resides in the cytoplasm. The catalysed reaction is N-terminal L-lysyl-[protein] + L-leucyl-tRNA(Leu) = N-terminal L-leucyl-L-lysyl-[protein] + tRNA(Leu) + H(+). The enzyme catalyses N-terminal L-arginyl-[protein] + L-leucyl-tRNA(Leu) = N-terminal L-leucyl-L-arginyl-[protein] + tRNA(Leu) + H(+). It carries out the reaction L-phenylalanyl-tRNA(Phe) + an N-terminal L-alpha-aminoacyl-[protein] = an N-terminal L-phenylalanyl-L-alpha-aminoacyl-[protein] + tRNA(Phe). Its function is as follows. Functions in the N-end rule pathway of protein degradation where it conjugates Leu, Phe and, less efficiently, Met from aminoacyl-tRNAs to the N-termini of proteins containing an N-terminal arginine or lysine. In Chromohalobacter salexigens (strain ATCC BAA-138 / DSM 3043 / CIP 106854 / NCIMB 13768 / 1H11), this protein is Leucyl/phenylalanyl-tRNA--protein transferase.